Reading from the N-terminus, the 358-residue chain is Very long chain fatty acid elongase AAEL008004 (358 aa).

Transmembrane regions (helical) follow at residues Trp26–Val46, Leu66–Ile86, Ala115–Met135, Val147–Gly167, Phe171–Ala191, Thr207–Ile227, and Ala234–Tyr254. A compositionally biased stretch (polar residues) spans Ser285–Thr295. Residues Ser285–Leu322 are disordered. The span at His299–Ser310 shows a compositional bias: basic residues. Residues Asn311–Leu322 show a composition bias toward polar residues.

Belongs to the ELO family.

It localises to the membrane. It catalyses the reaction a very-long-chain acyl-CoA + malonyl-CoA + H(+) = a very-long-chain 3-oxoacyl-CoA + CO2 + CoA. Its function is as follows. Could be implicated in synthesis of very long chain fatty acids. The sequence is that of Very long chain fatty acid elongase AAEL008004 from Aedes aegypti (Yellowfever mosquito).